The following is an 83-amino-acid chain: Cytochrome b559 subunit alpha (83 aa).

The chain crosses the membrane as a helical span at residues 21–35 (VIHSITIPSLFIAGW). Residue H23 coordinates heme.

This sequence belongs to the PsbE/PsbF family. In terms of assembly, heterodimer of an alpha subunit and a beta subunit. PSII is composed of 1 copy each of membrane proteins PsbA, PsbB, PsbC, PsbD, PsbE, PsbF, PsbH, PsbI, PsbJ, PsbK, PsbL, PsbM, PsbT, PsbX, PsbY, PsbZ, Psb30/Ycf12, at least 3 peripheral proteins of the oxygen-evolving complex and a large number of cofactors. It forms dimeric complexes. It depends on heme b as a cofactor.

Its subcellular location is the plastid. It localises to the chloroplast thylakoid membrane. Its function is as follows. This b-type cytochrome is tightly associated with the reaction center of photosystem II (PSII). PSII is a light-driven water:plastoquinone oxidoreductase that uses light energy to abstract electrons from H(2)O, generating O(2) and a proton gradient subsequently used for ATP formation. It consists of a core antenna complex that captures photons, and an electron transfer chain that converts photonic excitation into a charge separation. The sequence is that of Cytochrome b559 subunit alpha from Acorus calamus (Sweet flag).